The following is a 240-amino-acid chain: Octanoyltransferase (240 aa).

Residues 49–233 (GEAPELVWLL…AFESVFGATR (185 aa)) enclose the BPL/LPL catalytic domain. Residues 87 to 94 (RGGQVTYH), 162 to 164 (AIG), and 175 to 177 (GIA) each bind substrate. C193 acts as the Acyl-thioester intermediate in catalysis.

This sequence belongs to the LipB family.

Its subcellular location is the cytoplasm. The catalysed reaction is octanoyl-[ACP] + L-lysyl-[protein] = N(6)-octanoyl-L-lysyl-[protein] + holo-[ACP] + H(+). Its pathway is protein modification; protein lipoylation via endogenous pathway; protein N(6)-(lipoyl)lysine from octanoyl-[acyl-carrier-protein]: step 1/2. Catalyzes the transfer of endogenously produced octanoic acid from octanoyl-acyl-carrier-protein onto the lipoyl domains of lipoate-dependent enzymes. Lipoyl-ACP can also act as a substrate although octanoyl-ACP is likely to be the physiological substrate. The chain is Octanoyltransferase from Bradyrhizobium sp. (strain BTAi1 / ATCC BAA-1182).